The primary structure comprises 60 residues: Ferredoxin (60 aa).

4Fe-4S ferredoxin-type domains lie at 2–30 and 31–60; these read VTID…EIQG and DKVV…TVKE. Residues C9, C14, C17, C21, C41, C44, C47, and C51 each coordinate [4Fe-4S] cluster.

[4Fe-4S] cluster serves as cofactor.

Ferredoxins are iron-sulfur proteins that transfer electrons probably in the CO-dehydrogenase complex. The sequence is that of Ferredoxin from Methanothermococcus thermolithotrophicus (Methanococcus thermolithotrophicus).